The sequence spans 484 residues: ATP synthase subunit beta (484 aa).

168–175 (GGAGVGKT) serves as a coordination point for ATP.

This sequence belongs to the ATPase alpha/beta chains family. As to quaternary structure, F-type ATPases have 2 components, CF(1) - the catalytic core - and CF(0) - the membrane proton channel. CF(1) has five subunits: alpha(3), beta(3), gamma(1), delta(1), epsilon(1). CF(0) has three main subunits: a(1), b(2) and c(9-12). The alpha and beta chains form an alternating ring which encloses part of the gamma chain. CF(1) is attached to CF(0) by a central stalk formed by the gamma and epsilon chains, while a peripheral stalk is formed by the delta and b chains.

The protein localises to the cell membrane. The enzyme catalyses ATP + H2O + 4 H(+)(in) = ADP + phosphate + 5 H(+)(out). Functionally, produces ATP from ADP in the presence of a proton gradient across the membrane. The catalytic sites are hosted primarily by the beta subunits. The chain is ATP synthase subunit beta from Renibacterium salmoninarum (strain ATCC 33209 / DSM 20767 / JCM 11484 / NBRC 15589 / NCIMB 2235).